Consider the following 376-residue polypeptide: MRYADPSANRDLLGNRTLLFIFICAFALVTLLQQILYSKSYIKRYFEFYKEPLEFNSTRCLELRQEILEVKVLSMVKQSELFERWKSLQICKWAMDASEASLFKSTLSRCCNAPNFLFTTQKNTPVETNLRYEVESSGLYHIDQEIFKMFPKEMPYYRSQFKKCAVVGNGGILKNSGCGKEINSADFVFRCNLPPISGIYTTDVGEKTDVVTVNPSIIIDRFHKLEKWRRPFFSVLQRYENASVLLPAFYNVRNTLVSFRVKYMLDDFQSRQPVYFFHPQYLSSVSRYWLSLGVRARRISTGLILVTAALELCEEVHLFGFWAFPMNPSGFFITHHYYDNVKPKPGFHAMPSEIFTFLRMHSRGILRVHTGTCNCC.

Residues 17–37 (TLLFIFICAFALVTLLQQILY) traverse the membrane as a helical segment. Asn56 is a glycosylation site (N-linked (GlcNAc...) asparagine). 2 disulfides stabilise this stretch: Cys164–Cys313 and Cys178–Cys373. Substrate is bound by residues Asn192 and 214–216 (NPS). A glycan (N-linked (GlcNAc...) asparagine) is linked at Asn241. 300–302 (STG) contacts substrate. Catalysis depends on His348, which acts as the Proton donor/acceptor.

Belongs to the glycosyltransferase 29 family. As to expression, expressed in liver.

The protein resides in the golgi apparatus membrane. The enzyme catalyses a ganglioside GT1b (d18:1(4E)) + CMP-N-acetyl-beta-neuraminate = a ganglioside GQ1b (d18:1(4E)) + CMP + H(+). It carries out the reaction a ganglioside GQ1c (d18:1(4E)) + CMP-N-acetyl-beta-neuraminate = a ganglioside GP1c (d18:1(4E)) + CMP + H(+). The catalysed reaction is a ganglioside GD3 (d18:1(4E)) + CMP-N-acetyl-beta-neuraminate = a ganglioside GT3 (d18:1(4E)) + CMP + H(+). It catalyses the reaction a ganglioside GD1a (d18:1(4E)) + CMP-N-acetyl-beta-neuraminate = a ganglioside GT1a (d18:1(4E)) + CMP + H(+). The enzyme catalyses a ganglioside GM1b (d18:1(4E)) + CMP-N-acetyl-beta-neuraminate = a ganglioside GD1c (d18:1(4E)) + CMP + H(+). It functions in the pathway protein modification; protein glycosylation. In terms of biological role, involved in the synthesis of gangliosides GD1c, GT1a, GQ1b, GP1c and GT3 from GD1a, GT1b, GM1b and GD3 respectively. In Rattus norvegicus (Rat), this protein is Alpha-2,8-sialyltransferase 8E.